We begin with the raw amino-acid sequence, 189 residues long: Elongation factor P (189 aa).

It belongs to the elongation factor P family.

It is found in the cytoplasm. The protein operates within protein biosynthesis; polypeptide chain elongation. Involved in peptide bond synthesis. Stimulates efficient translation and peptide-bond synthesis on native or reconstituted 70S ribosomes in vitro. Probably functions indirectly by altering the affinity of the ribosome for aminoacyl-tRNA, thus increasing their reactivity as acceptors for peptidyl transferase. In Rhizobium leguminosarum bv. trifolii (strain WSM2304), this protein is Elongation factor P.